The primary structure comprises 174 residues: Stigma-specific STIG1-like protein 4 (174 aa).

A signal peptide spans 1 to 25; sequence MMSIKLTLCALIFFLLNSLLHHVLG. The segment at 140–174 is disordered; the sequence is PSSQPGKRHRRHKFHRPRPPPSPDSKLNYDDHDDE. A compositionally biased stretch (basic residues) spans 145 to 157; that stretch reads GKRHRRHKFHRPR.

The protein belongs to the STIG1 family.

It localises to the secreted. Its function is as follows. Endosperm-specific cysteine-rich protein that acts downstream of BHLH95/ZOU to modify the interface between embryo and endosperm and mediate the separation of these two tissues during seed development. Necessary for the biogenesis of the embryo sheath, an extracuticular endosperm-derived structure at the surface of the embryo. Required for the separation of embryo and endosperm, and for normal progression of the embryo through the endosperm tissue. Required for the formation of a normal embryonic cuticle. This Arabidopsis thaliana (Mouse-ear cress) protein is Stigma-specific STIG1-like protein 4.